A 361-amino-acid polypeptide reads, in one-letter code: Alternative oxidase, mitochondrial (361 aa).

A helical membrane pass occupies residues 156–178; it reads YLVRNVFLESVAGVPGMVAGMLR. Fe cation is bound by residues Glu-164, Glu-203, and His-206. Residues 218-240 traverse the membrane as a helical segment; it reads WFMRLAVLGAQGVFFNAMFLSYL. The Fe cation site is built by Glu-254, Glu-309, and His-312. Positions 318-328 are enriched in polar residues; it reads TLGNLDQNSDP. Residues 318–361 form a disordered region; it reads TLGNLDQNSDPNPYASKYDNPNVPHPRKDIKYLKPSGWEREEVM. Residues 343–361 show a composition bias toward basic and acidic residues; the sequence is PRKDIKYLKPSGWEREEVM.

This sequence belongs to the alternative oxidase family. Requires Fe cation as cofactor.

It localises to the mitochondrion inner membrane. Functionally, catalyzes cyanide-resistant oxygen consumption. May increase respiration when the cytochrome respiratory pathway is restricted, or in response to low temperatures. This chain is Alternative oxidase, mitochondrial (AOX1), found in Venturia inaequalis (Apple scab fungus).